A 126-amino-acid chain; its full sequence is Fluoride-specific ion channel FluC (126 aa).

Transmembrane regions (helical) follow at residues 6–26 (FVAV…FAVL), 36–56 (YGTL…VGFF), 68–88 (LLAV…SSEV), and 99–119 (IGML…MLGL). Residues glycine 76 and threonine 79 each contribute to the Na(+) site.

It belongs to the fluoride channel Fluc/FEX (TC 1.A.43) family.

It localises to the cell inner membrane. It catalyses the reaction fluoride(in) = fluoride(out). With respect to regulation, na(+) is not transported, but it plays an essential structural role and its presence is essential for fluoride channel function. In terms of biological role, fluoride-specific ion channel. Important for reducing fluoride concentration in the cell, thus reducing its toxicity. The protein is Fluoride-specific ion channel FluC of Ralstonia nicotianae (strain ATCC BAA-1114 / GMI1000) (Ralstonia solanacearum).